The chain runs to 394 residues: Elongation factor Tu 1 (394 aa).

The tr-type G domain occupies 10-204; it reads KPHVNVGTIG…ALDNYIPEPE (195 aa). The tract at residues 19-26 is G1; the sequence is GHVDHGKT. 19-26 is a GTP binding site; the sequence is GHVDHGKT. Thr-26 contributes to the Mg(2+) binding site. Residues 60-64 form a G2 region; that stretch reads GITIS. The segment at 81–84 is G3; it reads DCPG. GTP is bound by residues 81-85 and 136-139; these read DCPGH and NKCD. The segment at 136–139 is G4; sequence NKCD. The G5 stretch occupies residues 174–176; that stretch reads SAL.

Belongs to the TRAFAC class translation factor GTPase superfamily. Classic translation factor GTPase family. EF-Tu/EF-1A subfamily. As to quaternary structure, monomer.

It localises to the cytoplasm. It carries out the reaction GTP + H2O = GDP + phosphate + H(+). GTP hydrolase that promotes the GTP-dependent binding of aminoacyl-tRNA to the A-site of ribosomes during protein biosynthesis. This is Elongation factor Tu 1 from Photobacterium profundum (strain SS9).